The sequence spans 382 residues: D-galactonate dehydratase (382 aa).

Residue D183 participates in Mg(2+) binding. H185 serves as the catalytic Proton donor. Mg(2+)-binding residues include E209 and E235. H285 serves as the catalytic Proton acceptor. The interval 361 to 382 is disordered; it reads NENPPDWRNPVWRHSDGSIAEW.

It belongs to the mandelate racemase/muconate lactonizing enzyme family. GalD subfamily. Mg(2+) is required as a cofactor.

The catalysed reaction is D-galactonate = 2-dehydro-3-deoxy-D-galactonate + H2O. Its pathway is carbohydrate acid metabolism; D-galactonate degradation; D-glyceraldehyde 3-phosphate and pyruvate from D-galactonate: step 1/3. Its function is as follows. Catalyzes the dehydration of D-galactonate to 2-keto-3-deoxy-D-galactonate. The sequence is that of D-galactonate dehydratase from Xanthomonas axonopodis pv. citri (strain 306).